The following is a 122-amino-acid chain: Glycine cleavage system H protein (122 aa).

The 82-residue stretch at I22–E103 folds into the Lipoyl-binding domain. K63 is modified (N6-lipoyllysine).

Belongs to the GcvH family. The glycine cleavage system is composed of four proteins: P, T, L and H. Requires (R)-lipoate as cofactor.

Functionally, the glycine cleavage system catalyzes the degradation of glycine. The H protein shuttles the methylamine group of glycine from the P protein to the T protein. This chain is Glycine cleavage system H protein, found in Treponema denticola (strain ATCC 35405 / DSM 14222 / CIP 103919 / JCM 8153 / KCTC 15104).